A 153-amino-acid polypeptide reads, in one-letter code: Large ribosomal subunit protein bL9 (153 aa).

It belongs to the bacterial ribosomal protein bL9 family.

Functionally, binds to the 23S rRNA. In Micrococcus luteus (strain ATCC 4698 / DSM 20030 / JCM 1464 / CCM 169 / CCUG 5858 / IAM 1056 / NBRC 3333 / NCIMB 9278 / NCTC 2665 / VKM Ac-2230) (Micrococcus lysodeikticus), this protein is Large ribosomal subunit protein bL9.